Reading from the N-terminus, the 125-residue chain is Oxytocin-neurophysin 1 (125 aa).

The first 19 residues, 1–19 (MACPSLACCLLGLLALTSA), serve as a signal peptide directing secretion. The cysteines at positions 20 and 25 are disulfide-linked. Gly28 carries the post-translational modification Glycine amide. 7 cysteine pairs are disulfide-bonded: Cys41–Cys85, Cys44–Cys58, Cys52–Cys75, Cys59–Cys65, Cys92–Cys104, Cys98–Cys116, and Cys105–Cys110.

This sequence belongs to the vasopressin/oxytocin family. Interacts with oxytocin receptor (Ki=1.5 nM). Interacts with vasopressin V1aR/AVPR1A (Ki=37 nM), V1bR/AVPR1B (Ki=222 nM), and V2R/AVPR2 receptors (Ki=823 nM).

Functionally, neurophysin 1 specifically binds oxytocin. Its function is as follows. Oxytocin causes contraction of the smooth muscle of the uterus and of the mammary gland. Acts by binding to oxytocin receptor (OXTR). The protein is Oxytocin-neurophysin 1 (Oxt) of Rattus norvegicus (Rat).